The chain runs to 253 residues: Coenzyme F420:L-glutamate ligase (253 aa).

GTP is bound by residues 9–12 (LPEI), 38–39 (ST), and K43. Residue D113 coordinates a divalent metal cation. N116 lines the GTP pocket. A divalent metal cation-binding residues include D148, T149, and E206. Position 204–211 (204–211 (AGEGDDGT)) interacts with GTP.

The protein belongs to the CofE family. As to quaternary structure, homodimer. Mg(2+) is required as a cofactor. The cofactor is Mn(2+). It depends on K(+) as a cofactor.

The enzyme catalyses oxidized coenzyme F420-0 + GTP + L-glutamate = oxidized coenzyme F420-1 + GDP + phosphate + H(+). It catalyses the reaction oxidized coenzyme F420-1 + GTP + L-glutamate = oxidized coenzyme F420-2 + GDP + phosphate + H(+). Its pathway is cofactor biosynthesis; coenzyme F420 biosynthesis. Functionally, catalyzes the GTP-dependent successive addition of two or more gamma-linked L-glutamates to the L-lactyl phosphodiester of 7,8-didemethyl-8-hydroxy-5-deazariboflavin (F420-0) to form coenzyme F420-0-glutamyl-glutamate (F420-2) or polyglutamated F420 derivatives. The chain is Coenzyme F420:L-glutamate ligase from Natronomonas pharaonis (strain ATCC 35678 / DSM 2160 / CIP 103997 / JCM 8858 / NBRC 14720 / NCIMB 2260 / Gabara) (Halobacterium pharaonis).